Here is a 108-residue protein sequence, read N- to C-terminus: ATP synthase epsilon chain (108 aa).

This sequence belongs to the ATPase epsilon chain family. As to quaternary structure, F-type ATPases have 2 components, CF(1) - the catalytic core - and CF(0) - the membrane proton channel. CF(1) has five subunits: alpha(3), beta(3), gamma(1), delta(1), epsilon(1). CF(0) has three main subunits: a, b and c.

It localises to the cell inner membrane. Functionally, produces ATP from ADP in the presence of a proton gradient across the membrane. This Thermotoga maritima (strain ATCC 43589 / DSM 3109 / JCM 10099 / NBRC 100826 / MSB8) protein is ATP synthase epsilon chain.